The sequence spans 154 residues: Snaclec salmorin subunit A (154 aa).

The signal sequence occupies residues 1–23; sequence MGRFIFVSFGLLVVFLSLSGTGA. Intrachain disulfides connect Cys-27-Cys-38, Cys-55-Cys-152, and Cys-127-Cys-144. Residues 34–153 enclose the C-type lectin domain; sequence NNGHCYQAFN…CGQRNPFVCE (120 aa). Ca(2+) contacts are provided by Ser-66, Glu-68, and Glu-72. Glu-153 contacts Ca(2+).

The protein belongs to the snaclec family. In terms of assembly, heterodimer of subunits A and B; disulfide-linked. As to expression, expressed by the venom gland.

The protein localises to the secreted. Functionally, inhibits thrombin-induced fibrinogen clotting and factor Xa-induced prothrombin activation. Binds to thrombin and prothrombin exosites. This chain is Snaclec salmorin subunit A, found in Gloydius brevicauda (Korean slamosa snake).